The primary structure comprises 828 residues: Periplasmic nitrate reductase (828 aa).

Residues 1–31 constitute a signal peptide (tat-type signal); sequence MKLSRRSFMKANAVAAAAAAAGLSVPGVARA. Residues 39–95 enclose the 4Fe-4S Mo/W bis-MGD-type domain; the sequence is IKWDKAPCRFCGTGCGVLVGTQQGRVVACQGDPDAPVNRGLNCIKGYFLPKIMYGKD. [4Fe-4S] cluster contacts are provided by Cys46, Cys49, Cys53, and Cys81. Residues Lys83, Gln150, Asn175, Cys179, 212-219, 243-247, 262-264, Met372, Gln376, Asn482, 508-509, Lys531, Asp558, and 718-727 each bind Mo-bis(molybdopterin guanine dinucleotide); these read WGANMAEM, STYQH, QSD, SD, and TGRVLEHWHT. Phe794 serves as a coordination point for substrate. Mo-bis(molybdopterin guanine dinucleotide) is bound by residues Asn802 and Lys819.

The protein belongs to the prokaryotic molybdopterin-containing oxidoreductase family. NasA/NapA/NarB subfamily. As to quaternary structure, component of the periplasmic nitrate reductase NapAB complex composed of NapA and NapB. It depends on [4Fe-4S] cluster as a cofactor. The cofactor is Mo-bis(molybdopterin guanine dinucleotide). Predicted to be exported by the Tat system. The position of the signal peptide cleavage has not been experimentally proven.

It localises to the periplasm. It catalyses the reaction 2 Fe(II)-[cytochrome] + nitrate + 2 H(+) = 2 Fe(III)-[cytochrome] + nitrite + H2O. Functionally, catalytic subunit of the periplasmic nitrate reductase complex NapAB. Receives electrons from NapB and catalyzes the reduction of nitrate to nitrite. This is Periplasmic nitrate reductase from Escherichia coli O7:K1 (strain IAI39 / ExPEC).